The chain runs to 103 residues: MDPQQKGIVNTCFLTTRIPSWAGARQNVTGSDLGGKPVPSDVLESGRPLAAPRVRTLYEEQQLNMLTVNVILDDLKTQVAAMQNSVTAIQEELKDLKQRVAAR.

Residues R25 to S45 are disordered. A coiled-coil region spans residues L72–R99.

The protein belongs to the adenoviridae hexon-interlacing protein family. Homotrimer. Interacts with hexon protein; this interaction tethers the hexons together. Self-interacts with adjacent proteins. Interacts with kinesin light chain KLC1; this interaction leads to capsid disruption at the nuclear pore complex during virus entry into host cell.

The protein localises to the virion. The protein resides in the host nucleus. In terms of biological role, structural component of the virion that acts as a cement protein on the capsid exterior and forms triskelion structures consisting of three molecules that stabilize three hexon trimers at the center of each icosahedral facet and fixes the peripentonal hexons. Dispensable for assembly. During virus entry, recruits the anterograde motor kinesin-1 to the capsid docked at the nuclear pore complex thereby subjecting the docked capsid to a pulling force. The resulting tension leads to capsid disruption, dispersion of capsid fragments toward cell periphery and eventually viral DNA entry into the host nucleus. The chain is Hexon-interlacing protein from Canine adenovirus serotype 1 (strain CLL) (CAdV-1).